The sequence spans 601 residues: Probable sphingosine-1-phosphate lyase (601 aa).

At Lys360 the chain carries N6-(pyridoxal phosphate)lysine.

Belongs to the group II decarboxylase family. Sphingosine-1-phosphate lyase subfamily. Requires pyridoxal 5'-phosphate as cofactor.

The enzyme catalyses sphinganine 1-phosphate = hexadecanal + phosphoethanolamine. In terms of biological role, cleaves phosphorylated sphingoid bases (PSBs), such as sphingosine-1-phosphate, into fatty aldehydes and phosphoethanolamine. Possibly implicated in influencing the macrophage autophagy pathway. The polypeptide is Probable sphingosine-1-phosphate lyase (Legionella pneumophila subsp. pneumophila (strain Philadelphia 1 / ATCC 33152 / DSM 7513)).